The following is a 340-amino-acid chain: Nucleoid-associated protein PSPA7_4451 (340 aa).

The protein belongs to the YejK family.

The protein resides in the cytoplasm. It localises to the nucleoid. The chain is Nucleoid-associated protein PSPA7_4451 from Pseudomonas paraeruginosa (strain DSM 24068 / PA7) (Pseudomonas aeruginosa (strain PA7)).